The primary structure comprises 101 residues: Small ribosomal subunit protein uS14 (101 aa).

Belongs to the universal ribosomal protein uS14 family. Part of the 30S ribosomal subunit. Contacts proteins S3 and S10.

In terms of biological role, binds 16S rRNA, required for the assembly of 30S particles and may also be responsible for determining the conformation of the 16S rRNA at the A site. In Roseobacter denitrificans (strain ATCC 33942 / OCh 114) (Erythrobacter sp. (strain OCh 114)), this protein is Small ribosomal subunit protein uS14.